We begin with the raw amino-acid sequence, 372 residues long: Glutamate 5-kinase (372 aa).

Lys14 is an ATP binding site. Substrate is bound by residues Ser54, Asp141, and Asn153. ATP is bound by residues 173 to 174 and 215 to 221; these read TD and TGGMATK. In terms of domain architecture, PUA spans 280–358; sequence RGQVVLDTGA…DNIEEILGYD (79 aa).

Belongs to the glutamate 5-kinase family.

It is found in the cytoplasm. The catalysed reaction is L-glutamate + ATP = L-glutamyl 5-phosphate + ADP. It participates in amino-acid biosynthesis; L-proline biosynthesis; L-glutamate 5-semialdehyde from L-glutamate: step 1/2. Its function is as follows. Catalyzes the transfer of a phosphate group to glutamate to form L-glutamate 5-phosphate. The chain is Glutamate 5-kinase from Shewanella halifaxensis (strain HAW-EB4).